We begin with the raw amino-acid sequence, 372 residues long: N-methyl-L-tryptophan oxidase (372 aa).

Residue 4–34 (DLIIIGSGSVGAAAGYYATRAGLKVLMTDAH) participates in FAD binding. An S-8alpha-FAD cysteine modification is found at Cys-307.

The protein belongs to the MSOX/MTOX family. MTOX subfamily. In terms of assembly, monomer. The cofactor is FAD.

The enzyme catalyses N(alpha)-methyl-L-tryptophan + O2 + H2O = L-tryptophan + formaldehyde + H2O2. Functionally, catalyzes the oxidative demethylation of N-methyl-L-tryptophan. The polypeptide is N-methyl-L-tryptophan oxidase (Citrobacter koseri (strain ATCC BAA-895 / CDC 4225-83 / SGSC4696)).